Here is a 727-residue protein sequence, read N- to C-terminus: Protein TITANIA (727 aa).

Residues 1–136 (MFGDSDGSKD…LASLLQPVPA (136 aa)) form a disordered region. Residues 14 to 25 (GAPPSTTDPPFP) are compositionally biased toward pro residues. Residues 67 to 88 (DDGKHCVERDFLHLSAPKRGDP) show a composition bias toward basic and acidic residues. Positions 104–117 (DSLQLSLSLNSDGP) are enriched in low complexity. Residues 406-470 (ACTCSVCHKF…QFQCLACNHS (65 aa)) form a PHD-type zinc finger. A coiled-coil region spans residues 629 to 697 (VKCKEAEAKL…LEELKMLENS (69 aa)).

As to expression, widely expressed.

Its subcellular location is the nucleus. Functionally, probable transcription factor that functions as a regulator of metal transporter genes responsible for essential metals delivery to shoots and normal plant growth. Required for the maintenance of metal transporter gene expression, such as IRT1, IRT2, ZIP1, ZIP9, NRAMP1 and NRAMP5. This chain is Protein TITANIA, found in Oryza sativa subsp. japonica (Rice).